The primary structure comprises 491 residues: Cytochrome P450 2F2 (491 aa).

Residue Cys-436 coordinates heme.

The protein belongs to the cytochrome P450 family. It depends on heme as a cofactor.

The protein localises to the endoplasmic reticulum membrane. The protein resides in the microsome membrane. Functionally, involved in the regio- and stereoselective transformation of naphthalene to trans-1R-hydroxy-2R-glutathionyl-1,2-dihydronaphthalene in the presence of glutathione and glutathione S-transferases. It specifically catalyzes the production of a very reactive and potentially toxic intermediate, the 2R,2S arene oxide, that is associated with necrosis of the unciliated bronchiolar epithelial cells or club cells in lung. In Rattus norvegicus (Rat), this protein is Cytochrome P450 2F2 (Cyp2f2).